A 350-amino-acid chain; its full sequence is Phosphatidylinositol transfer protein PDR17 (350 aa).

Positions 139 to 297 constitute a CRAL-TRIO domain; it reads KVAVENETGK…LYNGLLDFKY (159 aa).

In terms of assembly, interacts with phosphatidylserine decarboxylase PSD2. Also interacts with PBI1.

The protein resides in the cytoplasm. Its subcellular location is the microsome. The enzyme catalyses a 1,2-diacyl-sn-glycero-3-phospho-(1D-myo-inositol)(in) = a 1,2-diacyl-sn-glycero-3-phospho-(1D-myo-inositol)(out). Functionally, has phosphatidylinositol transfer activity. Involved in the regulation of the phospholipid composition of plasma- and endomembranes. Altering plasma membrane composition may provide a possible mechanism for multidrug resistance. Contributes to efficient phospholipase D1 activation and phospholipase B1 inhibition in the regulation of phospholipid turnover. Forms a complex with phosphatidylserine decarboxylase PSD2 that seems essential for maintenance of vacuolar phosphatidylethanolamine (PE) levels. Allows interorganelle phosphatidylserine (PtdSer) transport via a process that involves the acceptor membrane complex PDR17-PDS2 that binds to PBI1 which in turn ligates to SCS2 and phosphatidic acid present in the donor membrane, forming a zone of apposition that facilitates PtdSer transfer. The sequence is that of Phosphatidylinositol transfer protein PDR17 from Saccharomyces cerevisiae (strain ATCC 204508 / S288c) (Baker's yeast).